Reading from the N-terminus, the 522-residue chain is Peptide chain release factor 3 (522 aa).

Residues 9-276 (KKRRTFAIIS…SFVNLAPAPQ (268 aa)) enclose the tr-type G domain. GTP-binding positions include 18 to 25 (SHPDAGKT), 86 to 90 (DTPGH), and 140 to 143 (NKLD).

It belongs to the TRAFAC class translation factor GTPase superfamily. Classic translation factor GTPase family. PrfC subfamily.

The protein resides in the cytoplasm. Functionally, increases the formation of ribosomal termination complexes and stimulates activities of RF-1 and RF-2. It binds guanine nucleotides and has strong preference for UGA stop codons. It may interact directly with the ribosome. The stimulation of RF-1 and RF-2 is significantly reduced by GTP and GDP, but not by GMP. In Lactobacillus johnsonii (strain CNCM I-12250 / La1 / NCC 533), this protein is Peptide chain release factor 3.